The chain runs to 569 residues: MFLEIILDSATYSFDRVITGKICFETNAATSPRSFQIQLRIKGYAVYHHGFLSSPSHKHPTTASASDSDEATEIFTHSQPLPIPAGPSSKSHAIDFKFKFPSKSASSLPCSKSNDSMVNICYMLKATISKRYAFLGSSQSAKAELIMVPPNLAGKPLSANSSFGSSAKTFQLPEFDSVTPSASLYKQPSFNSNPAPITTSSATHTSQFSTSSSSSVNSVHTPVMVPNPYFQYNSSMTAPSSSSSSVAPFVPRRQFSVSSASDPPQTPISMSPPIPPTPSQFSAFMYQNQQSYLSPQSHYENPLSISSRPSPCCPSTPSSAVTLSNGFDSQSNAYNNSGTGPPMLYKFPQRSYTAPNTSFNSQRRMSSITSLPTASFCPVKHGVSPPSLAGNQPSPLSSPLTNSNVSPSTICSPDNNVTFVNLAPGEKLTFKIEPNDLMDEEEVVENSNMYSIPGKTVATTVCHSSSSSGDFSALSCHRNLSFSESLPTAEDQVHNNHCAVSPSRRSSSNALYLATLPMGYERSNSVSYCSDSSLSSPLPDDNMLQDPHALNMAYAKEFDVLINEVLQSL.

2 disordered regions span residues 195–219 (APIT…VNSV) and 255–274 (FSVS…SPPI). Residues 198–219 (TTSSATHTSQFSTSSSSSVNSV) are compositionally biased toward low complexity. Over residues 264 to 274 (PQTPISMSPPI) the composition is skewed to pro residues.

Belongs to the arrestin family.

Its function is as follows. Has a role in promoting meiosis whereby it is involved in establishing the mating pheromone signaling pathway. It also has a role in suppressing meiosis until the conjugation process is complete. This is Protein ste7 (ste7) from Schizosaccharomyces pombe (strain 972 / ATCC 24843) (Fission yeast).